Reading from the N-terminus, the 96-residue chain is UPF0251 protein VPA0321 (96 aa).

It belongs to the UPF0251 family.

The protein is UPF0251 protein VPA0321 of Vibrio parahaemolyticus serotype O3:K6 (strain RIMD 2210633).